The following is a 343-amino-acid chain: Versiconal hemiacetal acetate reductase (343 aa).

Tyr59 serves as the catalytic Proton donor. His144 serves as a coordination point for substrate. 229 to 239 (SPVARGALARP) contacts NADP(+).

This sequence belongs to the aldo/keto reductase family. Aldo/keto reductase 2 subfamily.

It catalyses the reaction (2S)-versicolorone + NADP(+) = 1'-hydroxyversicolorone + NADPH + H(+). It carries out the reaction (3S)-versiconol acetate + NADP(+) = (2S,3S)-versiconal hemiacetal acetate + NADPH + H(+). The enzyme catalyses (S)-versiconol + NADP(+) = (2S-3S)-versiconal hemiacetal + NADPH + H(+). Catalyzes 3 reactions: from hydroxyversicolorone (HVN) to versicolorone (VONE), from versiconal hemiacetal acetate (VHA) to versiconol acetate (VOAc) and from versiconal (VHOH) to versiconol (VOH). Probably not an aflatoxin biosynthesis gene: may be involved in the vertical branching steps connecting the main pathway from HVN to VHOH with the side pathway from VONE to VOH. This is Versiconal hemiacetal acetate reductase (vrdA) from Aspergillus parasiticus.